Consider the following 179-residue polypeptide: Large ribosomal subunit protein uL6 (179 aa).

Belongs to the universal ribosomal protein uL6 family. Part of the 50S ribosomal subunit.

Functionally, this protein binds to the 23S rRNA, and is important in its secondary structure. It is located near the subunit interface in the base of the L7/L12 stalk, and near the tRNA binding site of the peptidyltransferase center. The sequence is that of Large ribosomal subunit protein uL6 from Chlorobium limicola (strain DSM 245 / NBRC 103803 / 6330).